Here is an 810-residue protein sequence, read N- to C-terminus: Volume-regulated anion channel subunit LRRC8A (810 aa).

Residue Met1 is modified to N-acetylmethionine. The Cytoplasmic portion of the chain corresponds to 1–22 (MIPVTELRYFADTQPAYRILKP). Residues 23 to 47 (WWDVFTDYISIVMLMIAVFGGTLQV) form a helical membrane-spanning segment. Residues 48-123 (TQDKMICLPC…YENRLHWFAK (76 aa)) lie on the Extracellular side of the membrane. 3 disulfide bridges follow: Cys54-Cys310, Cys57-Cys65, and Cys113-Cys295. N-linked (GlcNAc...) asparagine glycosylation is found at Asn66 and Asn83. Residues 124–142 (YFPYLVLLHTLIFLACSNF) form a helical membrane-spanning segment. Residues 143–264 (WFKFPRTSSK…EEGDIVYRLY (122 aa)) lie on the Cytoplasmic side of the membrane. Thr200 carries the phosphothreonine modification. Ser202 bears the Phosphoserine mark. Thr215 is subject to Phosphothreonine. Ser217 bears the Phosphoserine mark. Residues 265–286 (MRQTIIKVIKFFLIICYTVYYV) form a helical membrane-spanning segment. The Extracellular portion of the chain corresponds to 287 to 316 (HNIKFDVDCTVDIESLTGYRTYRCAHPLAT). The helical transmembrane segment at 317 to 341 (LFKILASFYISLVIFYGLICMYTLW) threads the bilayer. Over 342–810 (WMLRRSLKKY…RLWRADKEQA (469 aa)) the chain is Cytoplasmic. 17 LRR repeats span residues 399 to 422 (ENKL…RLTK), 423 to 445 (NAQD…VFDL), 447 to 468 (ELEV…IAQL), 469 to 492 (TGLK…AFLR), 493 to 515 (ENLR…IYSL), 518 to 542 (LEEL…GLRE), 543 to 565 (LKRL…VTDV), 567 to 589 (VHLQ…SLKK), 590 to 613 (MVNL…IFSL), 614 to 637 (HNLQ…SFQH), 639 to 661 (HRLT…IGNL), 662 to 684 (TNLE…LFYC), 686 to 707 (KLRY…IGLL), 708 to 730 (QNLQ…LFQC), 732 to 753 (KLRA…VGEL), 754 to 776 (TNLT…LGEC), and 778 to 801 (LLKR…VKER). Positions 706-707 (LL) match the Di-leucine motif motif.

The protein belongs to the LRRC8 family. As to quaternary structure, heterohexamer; oligomerizes with other LRRC8 proteins (LRRC8B, LRRC8C, LRRC8D and/or LRRC8E) to form a heterohexamer. Can form homohexamers in vitro, but these have lower conductance than heterohexamers. Detected in a channel complex that contains LRRC8A, LRRC8C and LRRC8E. In vivo, the subunit composition may depend primarily on expression levels, and heterooligomeric channels containing various proportions of the different LRRC8 proteins may coexist. Interact with GRB2. Interacts with NOX4; this interaction prevents the ubiquitin-mediated degradation of LRRC8A. In terms of processing, N-glycosylated.

The protein localises to the cell membrane. The protein resides in the lysosome membrane. It carries out the reaction chloride(in) = chloride(out). It catalyses the reaction iodide(out) = iodide(in). The catalysed reaction is taurine(out) = taurine(in). The enzyme catalyses L-aspartate(out) = L-aspartate(in). It carries out the reaction L-glutamate(out) = L-glutamate(in). It catalyses the reaction myo-inositol(out) = myo-inositol(in). The catalysed reaction is 2',3'-cGAMP(out) = 2',3'-cGAMP(in). Its activity is regulated as follows. Inhibited by (4-[(2-butyl-6,7-dichloro-2-cyclopentyl-2,3-dihydro-1-oxo-1H-inden-5-yl)oxy]butanoic acid), which plugs the channel like a cork in a bottle by binding in the extracellular selectivity filter and sterically occluding ion conduction. Lipids may block conduction in closed heterohexameric channels. In terms of biological role, essential component of the volume-regulated anion channel (VRAC, also named VSOAC channel), an anion channel required to maintain a constant cell volume in response to extracellular or intracellular osmotic changes. The VRAC channel conducts iodide better than chloride and can also conduct organic osmolytes like taurine. Mediates efflux of amino acids, such as aspartate and glutamate, in response to osmotic stress. In complex with LRRC8C or LRRC8E, acts as a transporter of immunoreactive cyclic dinucleotide GMP-AMP (2'-3'-cGAMP), an immune messenger produced in response to DNA virus in the cytosol: mediates both import and export of 2'-3'-cGAMP, thereby promoting transfer of 2'-3'-cGAMP to bystander cells. In contrast, complexes containing LRRC8D inhibit transport of 2'-3'-cGAMP. Required for in vivo channel activity, together with at least one other family member (LRRC8B, LRRC8C, LRRC8D or LRRC8E); channel characteristics depend on the precise subunit composition. Can form functional channels by itself (in vitro). Involved in B-cell development: required for the pro-B cell to pre-B cell transition. Also required for T-cell development. Required for myoblast differentiation: VRAC activity promotes membrane hyperpolarization and regulates insulin-stimulated glucose metabolism and oxygen consumption. Also acts as a regulator of glucose-sensing in pancreatic beta cells: VRAC currents, generated in response to hypotonicity- or glucose-induced beta cell swelling, depolarize cells, thereby causing electrical excitation, leading to increase glucose sensitivity and insulin secretion. Also plays a role in lysosome homeostasis by forming functional lysosomal VRAC channels in response to low cytoplasmic ionic strength condition: lysosomal VRAC channels are necessary for the formation of large lysosome-derived vacuoles, which store and then expel excess water to maintain cytosolic water homeostasis. Acts as a key factor in NLRP3 inflammasome activation by modulating itaconate efflux and mitochondria function. The chain is Volume-regulated anion channel subunit LRRC8A from Rattus norvegicus (Rat).